A 90-amino-acid polypeptide reads, in one-letter code: Acylphosphatase (90 aa).

The region spanning 5–90 is the Acylphosphatase-like domain; that stretch reads GCKVIVSGIV…YQKTNDFIAC (86 aa). Residues Arg20 and Asn38 contribute to the active site.

Belongs to the acylphosphatase family.

The catalysed reaction is an acyl phosphate + H2O = a carboxylate + phosphate + H(+). This is Acylphosphatase (acyP) from Psychromonas ingrahamii (strain DSM 17664 / CCUG 51855 / 37).